Reading from the N-terminus, the 293-residue chain is Proline iminopeptidase (293 aa).

Positions 28–277 (KPLVLLHGGP…FSRHMPFVEE (250 aa)) constitute an AB hydrolase-1 domain. Catalysis depends on Ser104, which acts as the Nucleophile. Asp244 is a catalytic residue. The active-site Proton donor is His271.

This sequence belongs to the peptidase S33 family.

It catalyses the reaction Release of N-terminal proline from a peptide.. Releases the N-terminal proline from various substrates. This Clostridium botulinum (strain Hall / ATCC 3502 / NCTC 13319 / Type A) protein is Proline iminopeptidase.